We begin with the raw amino-acid sequence, 195 residues long: Dephospho-CoA kinase (195 aa).

Residues 4–195 form the DPCK domain; it reads IIGLTGGIAS…EQILDALQRL (192 aa). ATP is bound at residue 12 to 17; it reads ASGKST.

Belongs to the CoaE family.

The protein resides in the cytoplasm. It catalyses the reaction 3'-dephospho-CoA + ATP = ADP + CoA + H(+). It functions in the pathway cofactor biosynthesis; coenzyme A biosynthesis; CoA from (R)-pantothenate: step 5/5. Functionally, catalyzes the phosphorylation of the 3'-hydroxyl group of dephosphocoenzyme A to form coenzyme A. This is Dephospho-CoA kinase from Streptococcus agalactiae serotype Ia (strain ATCC 27591 / A909 / CDC SS700).